A 79-amino-acid polypeptide reads, in one-letter code: Putative antitoxin MM_2475 (79 aa).

This sequence belongs to the UPF0330 family.

In terms of biological role, possibly the antitoxin component of a type II toxin-antitoxin (TA) system. The sequence is that of Putative antitoxin MM_2475 from Methanosarcina mazei (strain ATCC BAA-159 / DSM 3647 / Goe1 / Go1 / JCM 11833 / OCM 88) (Methanosarcina frisia).